The following is a 227-amino-acid chain: Cytochrome c oxidase subunit 2 (227 aa).

The Mitochondrial intermembrane portion of the chain corresponds to 1–14; sequence MAYPFQLGFQDATS. A helical membrane pass occupies residues 15-45; it reads PIMEELLHFHDHTLMIVFLISSLVLYIISLM. The Mitochondrial matrix segment spans residues 46 to 59; it reads LTTKLTHTSTMDAQ. Residues 60–87 traverse the membrane as a helical segment; it reads EVETIWTILPAIILILIALPSLRILYMM. Residues 88-227 are Mitochondrial intermembrane-facing; it reads DEINNPSLTV…HFEKWSASML (140 aa). Cu cation is bound by residues His161, Cys196, Glu198, Cys200, His204, and Met207. Residue Glu198 participates in Mg(2+) binding.

Belongs to the cytochrome c oxidase subunit 2 family. Component of the cytochrome c oxidase (complex IV, CIV), a multisubunit enzyme composed of 14 subunits. The complex is composed of a catalytic core of 3 subunits MT-CO1, MT-CO2 and MT-CO3, encoded in the mitochondrial DNA, and 11 supernumerary subunits COX4I, COX5A, COX5B, COX6A, COX6B, COX6C, COX7A, COX7B, COX7C, COX8 and NDUFA4, which are encoded in the nuclear genome. The complex exists as a monomer or a dimer and forms supercomplexes (SCs) in the inner mitochondrial membrane with NADH-ubiquinone oxidoreductase (complex I, CI) and ubiquinol-cytochrome c oxidoreductase (cytochrome b-c1 complex, complex III, CIII), resulting in different assemblies (supercomplex SCI(1)III(2)IV(1) and megacomplex MCI(2)III(2)IV(2)). Found in a complex with TMEM177, COA6, COX18, COX20, SCO1 and SCO2. Interacts with TMEM177 in a COX20-dependent manner. Interacts with COX20. Interacts with COX16. Requires Cu cation as cofactor.

The protein resides in the mitochondrion inner membrane. The enzyme catalyses 4 Fe(II)-[cytochrome c] + O2 + 8 H(+)(in) = 4 Fe(III)-[cytochrome c] + 2 H2O + 4 H(+)(out). Functionally, component of the cytochrome c oxidase, the last enzyme in the mitochondrial electron transport chain which drives oxidative phosphorylation. The respiratory chain contains 3 multisubunit complexes succinate dehydrogenase (complex II, CII), ubiquinol-cytochrome c oxidoreductase (cytochrome b-c1 complex, complex III, CIII) and cytochrome c oxidase (complex IV, CIV), that cooperate to transfer electrons derived from NADH and succinate to molecular oxygen, creating an electrochemical gradient over the inner membrane that drives transmembrane transport and the ATP synthase. Cytochrome c oxidase is the component of the respiratory chain that catalyzes the reduction of oxygen to water. Electrons originating from reduced cytochrome c in the intermembrane space (IMS) are transferred via the dinuclear copper A center (CU(A)) of subunit 2 and heme A of subunit 1 to the active site in subunit 1, a binuclear center (BNC) formed by heme A3 and copper B (CU(B)). The BNC reduces molecular oxygen to 2 water molecules using 4 electrons from cytochrome c in the IMS and 4 protons from the mitochondrial matrix. The sequence is that of Cytochrome c oxidase subunit 2 (MT-CO2) from Ceratotherium simum (White rhinoceros).